The sequence spans 112 residues: uncharacterized protein (112 aa).

Residues 82-104 (IFFGFSIIASYFLKFHLLYVILL) traverse the membrane as a helical segment.

It is found in the membrane. This is an uncharacterized protein from Pasteurella multocida (strain Pm70).